Here is a 311-residue protein sequence, read N- to C-terminus: Nudix hydrolase 9 (311 aa).

Residues 131-298 enclose the Nudix hydrolase domain; the sequence is SSPLGNGAVI…GFALYELMLQ (168 aa). A Nudix box motif is present at residues 192–213; the sequence is LNKKVTQEMFDSIICEVVEETG. Mg(2+)-binding residues include E207 and E211.

This sequence belongs to the Nudix hydrolase family. The cofactor is Mg(2+). Requires Mn(2+) as cofactor. As to expression, expressed in roots, stems and leaves.

Probably mediates the hydrolysis of some nucleoside diphosphate derivatives. The sequence is that of Nudix hydrolase 9 (NUDT9) from Arabidopsis thaliana (Mouse-ear cress).